Consider the following 1403-residue polypeptide: Sushi, nidogen and EGF-like domain-containing protein 1 (1403 aa).

An N-terminal signal peptide occupies residues 1-24 (MRLGAAWALLLAAALGLGTRGVRA). The NIDO domain maps to 103 to 258 (AFWADVDNRR…GRWAFRIDDA (156 aa)). 3 consecutive EGF-like domains span residues 268–309 (TTSV…RRCH), 311–347 (DVNE…PTCE), and 349–385 (AQSP…ATCE). Disulfide bonds link C272–C284, C278–C297, C299–C308, C315–C326, C320–C335, C337–C346, C353–C364, C358–C373, C375–C384, C391–C402, C396–C411, C413–C422, C433–C444, C438–C453, C455–C464, C472–C480, C474–C488, and C490–C499. N292 is a glycosylation site (N-linked (GlcNAc...) asparagine). The EGF-like 4; calcium-binding domain occupies 387-423 (DVDECSSDPCQNGGSCVDLVGNYSCICVEPFEGPQCE). N-linked (GlcNAc...) asparagine glycosylation occurs at N408. EGF-like domains follow at residues 429–465 (VPSP…LDCR) and 468–500 (ILND…LLCE). An N-linked (GlcNAc...) asparagine glycan is attached at N484. A glycan (N-linked (GlcNAc...) asparagine) is linked at N536. EGF-like domains are found at residues 541 to 577 (LPSP…RHCE), 580 to 616 (RPHL…RHCE), 619 to 655 (KPDS…RHCE), and 657 to 693 (APSP…HRCQ). 26 cysteine pairs are disulfide-bonded: C545–C556, C550–C565, C567–C576, C584–C595, C589–C604, C606–C615, C623–C634, C628–C643, C645–C654, C661–C672, C666–C681, C683–C692, C698–C739, C724–C751, C757–C768, C762–C777, C779–C788, C795–C806, C800–C815, C817–C826, C833–C844, C838–C853, C855–C864, C871–C882, C876–C891, and C893–C902. The Sushi domain maps to 696–753 (VDCGHPEEVEHATMRFNGTHVGSVALYTCEPGFSLSALSHIRVCQPQGVWSQPPQCIE). N712 carries N-linked (GlcNAc...) asparagine glycosylation. Positions 753–789 (EVDECRSQPCLHGGSCQDLIADYQCLCSPGYEGVHCE) constitute an EGF-like 11; calcium-binding domain. One can recognise an EGF-like 12; calcium-binding domain in the interval 791 to 827 (ETDECQAQPCRNGGSCRDLPRAFICQCPEGFVGIHCE). EGF-like domains are found at residues 829-865 (EVDA…YNCE) and 867-903 (VSDP…KDCT). Residue N886 is glycosylated (N-linked (GlcNAc...) asparagine). Fibronectin type-III domains are found at residues 908-1006 (PPTA…TRPR), 1007-1105 (PIED…TRPL), and 1106-1200 (PPAN…SPRD). N977, N1015, N1109, N1139, and N1298 each carry an N-linked (GlcNAc...) asparagine glycan. Residues 1306–1342 (TPGSCSEDACQNGGTCVPGADAHSCDCRPGFKGRHCE) enclose the EGF-like 15 domain. Disulfide bonds link C1310–C1321, C1315–C1330, and C1332–C1341.

In terms of processing, phosphorylated on serine and threonine residues. Post-translationally, N-glycosylated. In terms of tissue distribution, expressed in lung.

The protein localises to the secreted. It is found in the extracellular space. It localises to the extracellular matrix. The protein is Sushi, nidogen and EGF-like domain-containing protein 1 of Mus musculus (Mouse).